The chain runs to 230 residues: Large ribosomal subunit protein uL1 (230 aa).

This sequence belongs to the universal ribosomal protein uL1 family. As to quaternary structure, part of the 50S ribosomal subunit.

Binds directly to 23S rRNA. The L1 stalk is quite mobile in the ribosome, and is involved in E site tRNA release. Functionally, protein L1 is also a translational repressor protein, it controls the translation of the L11 operon by binding to its mRNA. This Erythrobacter litoralis (strain HTCC2594) protein is Large ribosomal subunit protein uL1.